A 627-amino-acid chain; its full sequence is tRNA uridine 5-carboxymethylaminomethyl modification enzyme MnmG (627 aa).

FAD is bound by residues 13–18, V125, and S180; that span reads GGGHAG. 274-288 is an NAD(+) binding site; that stretch reads GPRYCPSIEDKVVRF. Q371 contributes to the FAD binding site.

Belongs to the MnmG family. Homodimer. Heterotetramer of two MnmE and two MnmG subunits. The cofactor is FAD.

Its subcellular location is the cytoplasm. In terms of biological role, NAD-binding protein involved in the addition of a carboxymethylaminomethyl (cmnm) group at the wobble position (U34) of certain tRNAs, forming tRNA-cmnm(5)s(2)U34. The protein is tRNA uridine 5-carboxymethylaminomethyl modification enzyme MnmG of Francisella tularensis subsp. tularensis (strain WY96-3418).